Consider the following 141-residue polypeptide: Large ribosomal subunit protein uL11 (141 aa).

Belongs to the universal ribosomal protein uL11 family. In terms of assembly, part of the ribosomal stalk of the 50S ribosomal subunit. Interacts with L10 and the large rRNA to form the base of the stalk. L10 forms an elongated spine to which L12 dimers bind in a sequential fashion forming a multimeric L10(L12)X complex. Post-translationally, one or more lysine residues are methylated.

Functionally, forms part of the ribosomal stalk which helps the ribosome interact with GTP-bound translation factors. This is Large ribosomal subunit protein uL11 from Geobacillus kaustophilus (strain HTA426).